Consider the following 1366-residue polypeptide: Agglutinin-like protein 6 (1366 aa).

Positions 1 to 18 (MKTVILLHLFFYCTIAMA) are cleaved as a signal peptide. Cystine bridges form between Cys-74-Cys-151, Cys-97-Cys-113, Cys-206-Cys-301, and Cys-228-Cys-257. Residue Asn-294 is glycosylated (N-linked (GlcNAc...) asparagine). 6 ALS repeats span residues 368–399 (TTITTSYVGISTSLSTKTATIGGTATVVVDVP), 404–435 (TTITSIWTGSATTSSTYTNPTDSIDTVVVQVP), 441–472 (VTTTQFWSGSVPTTETVTTGPQGTDSVIIKEP), 477–508 (VTTTEFWSESFATTETVTNGPEGTDSVIVREP), 513–544 (VTTTEFWSESFATTETVTNGPEGTDSVIVREP), and 549–580 (VTTTEFWSESFATTETITTGPLGTDSIVIHDP). The interval 449-470 (GSVPTTETVTTGPQGTDSVIIK) is disordered. Over residues 451 to 464 (VPTTETVTTGPQGT) the composition is skewed to low complexity. 3 disordered regions span residues 583 to 658 (ESSS…TSES), 758 to 780 (LSSDTSSYYPSSTISPSDDFPHT), and 804 to 833 (VSLTSDPASSFDSSSSLNSDSSSSPSSDQS). Asn-596 carries N-linked (GlcNAc...) asparagine glycosylation. Low complexity-rich tracts occupy residues 758–775 (LSSDTSSYYPSSTISPSD) and 805–833 (SLTSDPASSFDSSSSLNSDSSSSPSSDQS). Residue Asn-866 is glycosylated (N-linked (GlcNAc...) asparagine). Disordered stretches follow at residues 874–915 (ESES…STVT), 928–976 (TGMP…TSAS), 996–1040 (SETS…KESS), 1081–1130 (EDNE…VSSV), and 1158–1218 (ETSL…STNN). Low complexity-rich tracts occupy residues 875–889 (SESSSVASPSMASES), 898–915 (SESTDTTSSIGTDSSTVT), and 940–958 (TSDVTTTSSFVASSTPTSA). Over residues 959–969 (EQSITDNPNID) the composition is skewed to polar residues. Over residues 996 to 1021 (SETSTLSSDDSTSSDTSISSTTNSDT) the composition is skewed to low complexity. Polar residues-rich tracts occupy residues 1022 to 1040 (GNINAGSSHTSTASIKESS) and 1085 to 1107 (PNTFTSTPSSHSEIFSSDNSVLS). Low complexity-rich tracts occupy residues 1121 to 1130 (VTDTTTVSSV) and 1158 to 1177 (ETSLRSTSSSSNHATESSGT). Polar residues-rich tracts occupy residues 1192-1202 (TSTDNRLSYST) and 1209-1218 (TYANSGSTNN). N-linked (GlcNAc...) asparagine glycosylation occurs at Asn-1273. The GPI-anchor amidated serine moiety is linked to residue Ser-1345. Positions 1346–1366 (SATKHPSWLLKFISVALFFFL) are cleaved as a propeptide — removed in mature form.

The protein belongs to the ALS family. In terms of processing, the GPI-anchor is attached to the protein in the endoplasmic reticulum and serves to target the protein to the cell surface. There, the glucosamine-inositol phospholipid moiety is cleaved off and the GPI-modified mannoprotein is covalently attached via its lipidless GPI glycan remnant to the 1,6-beta-glucan of the outer cell wall layer.

It is found in the cell membrane. The protein resides in the secreted. The protein localises to the cell wall. In terms of biological role, cell surface adhesion protein which mediates both yeast-to-host tissue adherence and yeast aggregation. Plays an important role in the pathogenesis of C.albicans infections. This Candida albicans (strain SC5314 / ATCC MYA-2876) (Yeast) protein is Agglutinin-like protein 6 (ALS6).